Consider the following 1312-residue polypeptide: Multidrug resistance protein 3 (1312 aa).

A helical membrane pass occupies residues 51-71 (GFIDYILLIGGIIGAMAAGVL). In terms of domain architecture, ABC transmembrane type-1 1 spans 59 to 369 (IGGIIGAMAA…VAMPINALST (311 aa)). The N-linked (GlcNAc...) asparagine glycan is linked to Asn-98. 5 consecutive transmembrane segments (helical) span residues 127–147 (IYFA…FFVL), 197–217 (KFGV…IGFS), 224–244 (LVIM…GFFA), 302–322 (VVGV…ALGS), and 344–364 (MVVF…AMPI). The ABC transporter 1 domain maps to 404 to 643 (IKLEDVQFRY…KATYYGLVKR (240 aa)). 439-446 (GASGCGKS) contributes to the ATP binding site. The ABC transmembrane type-1 2 domain occupies 724–1033 (LLSFLGLIGG…LGQMIPDVGK (310 aa)). Helical transmembrane passes span 725 to 745 (LSFL…FYMI) and 776 to 796 (IWIL…LGLF). An N-linked (GlcNAc...) asparagine glycan is attached at Asn-819. 3 consecutive transmembrane segments (helical) span residues 852-872 (VGNV…AFYY), 874-894 (WKVA…VFLN), and 958-978 (AFVS…SFYI). The ABC transporter 2 domain occupies 1068–1307 (IEFKDICFRY…KGFYYTLAMQ (240 aa)). 1103 to 1110 (GASGCGKS) contributes to the ATP binding site.

The protein belongs to the ABC transporter superfamily. ABCB family. Multidrug resistance exporter (TC 3.A.1.201) subfamily.

The protein resides in the membrane. The catalysed reaction is ATP + H2O + xenobioticSide 1 = ADP + phosphate + xenobioticSide 2.. Its function is as follows. Energy-dependent efflux pump responsible for decreased drug accumulation in multidrug resistance parasites. This chain is Multidrug resistance protein 3, found in Entamoeba histolytica (strain ATCC 30459 / HM-1:IMSS / ABRM).